Consider the following 139-residue polypeptide: Aspartate 1-decarboxylase (139 aa).

S25 functions as the Schiff-base intermediate with substrate; via pyruvic acid in the catalytic mechanism. Position 25 is a pyruvic acid (Ser) (S25). T57 contacts substrate. The active-site Proton donor is the Y58. 73-75 (GAA) provides a ligand contact to substrate. A disordered region spans residues 117 to 139 (TGSDPADAPAGSGLLRGDRPAGR).

It belongs to the PanD family. Heterooctamer of four alpha and four beta subunits. Pyruvate serves as cofactor. In terms of processing, is synthesized initially as an inactive proenzyme, which is activated by self-cleavage at a specific serine bond to produce a beta-subunit with a hydroxyl group at its C-terminus and an alpha-subunit with a pyruvoyl group at its N-terminus.

It localises to the cytoplasm. It carries out the reaction L-aspartate + H(+) = beta-alanine + CO2. It functions in the pathway cofactor biosynthesis; (R)-pantothenate biosynthesis; beta-alanine from L-aspartate: step 1/1. In terms of biological role, catalyzes the pyruvoyl-dependent decarboxylation of aspartate to produce beta-alanine. This is Aspartate 1-decarboxylase from Nocardioides sp. (strain ATCC BAA-499 / JS614).